We begin with the raw amino-acid sequence, 536 residues long: Portal protein (536 aa).

It belongs to the podoviridae portal protein family. In terms of assembly, homododecamer. Interacts with major capsid protein. Interacts with the tail tube protein gp11. Interacts with the terminase large subunit. Interacts with the internal virion protein gp14.

It localises to the virion. Its function is as follows. Forms the portal vertex of the capsid. This portal plays critical roles in head assembly, genome packaging, neck/tail attachment, and genome ejection. The portal protein multimerizes as a single ring-shaped homododecamer arranged around a central channel. This Escherichia phage T7 (Bacteriophage T7) protein is Portal protein.